The primary structure comprises 382 residues: Pyrimidine monooxygenase RutA (382 aa).

FMN-binding positions include 68–69 (IK), N134, E143, 159–160 (RY), and S209.

Belongs to the NtaA/SnaA/DszA monooxygenase family. RutA subfamily.

The catalysed reaction is uracil + FMNH2 + NADH + O2 = (Z)-3-ureidoacrylate + FMN + NAD(+) + H2O + H(+). The enzyme catalyses thymine + FMNH2 + NADH + O2 = (Z)-2-methylureidoacrylate + FMN + NAD(+) + H2O + H(+). In terms of biological role, catalyzes the pyrimidine ring opening between N-3 and C-4 by an unusual flavin hydroperoxide-catalyzed mechanism, adding oxygen atoms in the process to yield ureidoacrylate peracid, that immediately reacts with FMN forming ureidoacrylate and FMN-N(5)-oxide. The FMN-N(5)-oxide reacts spontaneously with NADH to produce FMN. Requires the flavin reductase RutF to regenerate FMN in vivo. The protein is Pyrimidine monooxygenase RutA of Escherichia coli (strain SE11).